A 367-amino-acid polypeptide reads, in one-letter code: Probable peptidoglycan glycosyltransferase FtsW (367 aa).

The Cytoplasmic portion of the chain corresponds to Met1–Asp8. The chain crosses the membrane as a helical span at residues Met9–Ala29. Over Ser30–Ser49 the chain is Periplasmic. The helical transmembrane segment at Leu50–Trp70 threads the bilayer. Residues Lys71–Lys72 are Cytoplasmic-facing. Residues Trp73–Ile93 form a helical membrane-spanning segment. At Gly94–Gln138 the chain is on the periplasmic side. A helical membrane pass occupies residues Phe139–Ala159. Over Gln160–His161 the chain is Cytoplasmic. A helical transmembrane segment spans residues Asp162–Thr182. Position 183 (Lys183) is a topological domain, periplasmic. A helical membrane pass occupies residues Val184 to Thr204. The Cytoplasmic portion of the chain corresponds to Lys205 to Ala225. A helical transmembrane segment spans residues Gly226–Leu246. Topologically, residues Gly247–Ser266 are periplasmic. The chain crosses the membrane as a helical span at residues Val267–Leu287. Topologically, residues Val288–Arg304 are cytoplasmic. The helical transmembrane segment at Phe305–Val325 threads the bilayer. Residues Thr326–Ala335 are Periplasmic-facing. Residues Leu336–Leu356 form a helical membrane-spanning segment. At Leu357–Ala367 the chain is on the cytoplasmic side.

This sequence belongs to the SEDS family. FtsW subfamily.

The protein localises to the cell inner membrane. The enzyme catalyses [GlcNAc-(1-&gt;4)-Mur2Ac(oyl-L-Ala-gamma-D-Glu-L-Lys-D-Ala-D-Ala)](n)-di-trans,octa-cis-undecaprenyl diphosphate + beta-D-GlcNAc-(1-&gt;4)-Mur2Ac(oyl-L-Ala-gamma-D-Glu-L-Lys-D-Ala-D-Ala)-di-trans,octa-cis-undecaprenyl diphosphate = [GlcNAc-(1-&gt;4)-Mur2Ac(oyl-L-Ala-gamma-D-Glu-L-Lys-D-Ala-D-Ala)](n+1)-di-trans,octa-cis-undecaprenyl diphosphate + di-trans,octa-cis-undecaprenyl diphosphate + H(+). It participates in cell wall biogenesis; peptidoglycan biosynthesis. Functionally, peptidoglycan polymerase that is essential for cell division. The sequence is that of Probable peptidoglycan glycosyltransferase FtsW from Geobacter sp. (strain M18).